The following is a 437-amino-acid chain: UDP-N-acetylmuramate--L-alanine ligase (437 aa).

G114–S120 serves as a coordination point for ATP.

It belongs to the MurCDEF family.

It localises to the cytoplasm. It catalyses the reaction UDP-N-acetyl-alpha-D-muramate + L-alanine + ATP = UDP-N-acetyl-alpha-D-muramoyl-L-alanine + ADP + phosphate + H(+). The protein operates within cell wall biogenesis; peptidoglycan biosynthesis. Its function is as follows. Cell wall formation. The protein is UDP-N-acetylmuramate--L-alanine ligase of Lactobacillus johnsonii (strain CNCM I-12250 / La1 / NCC 533).